The chain runs to 388 residues: Chorismate synthase (388 aa).

Residues Arg39 and Arg45 each contribute to the NADP(+) site. FMN is bound by residues 130 to 132, 251 to 252, Gly296, 311 to 315, and Arg337; these read RSS, NA, and KPIPT.

This sequence belongs to the chorismate synthase family. In terms of assembly, homotetramer. Requires FMNH2 as cofactor.

It carries out the reaction 5-O-(1-carboxyvinyl)-3-phosphoshikimate = chorismate + phosphate. It functions in the pathway metabolic intermediate biosynthesis; chorismate biosynthesis; chorismate from D-erythrose 4-phosphate and phosphoenolpyruvate: step 7/7. Catalyzes the anti-1,4-elimination of the C-3 phosphate and the C-6 proR hydrogen from 5-enolpyruvylshikimate-3-phosphate (EPSP) to yield chorismate, which is the branch point compound that serves as the starting substrate for the three terminal pathways of aromatic amino acid biosynthesis. This reaction introduces a second double bond into the aromatic ring system. The chain is Chorismate synthase from Streptococcus uberis (strain ATCC BAA-854 / 0140J).